The primary structure comprises 112 residues: Putative pterin-4-alpha-carbinolamine dehydratase (112 aa).

Belongs to the pterin-4-alpha-carbinolamine dehydratase family.

The catalysed reaction is (4aS,6R)-4a-hydroxy-L-erythro-5,6,7,8-tetrahydrobiopterin = (6R)-L-erythro-6,7-dihydrobiopterin + H2O. The sequence is that of Putative pterin-4-alpha-carbinolamine dehydratase from Photobacterium profundum (strain SS9).